The chain runs to 387 residues: Patatin group A-2 (387 aa).

The first 23 residues, 1 to 23 (MATTKSFLILIVMILATTSSTFA), serve as a signal peptide directing secretion. Residues 32-230 (LSIDGGGIKG…TVADPALLSV (199 aa)) enclose the PNPLA domain. The GXGXXG motif lies at 36 to 41 (GGGIKG). The GXSXG motif lies at 75–79 (GTSTG). Ser77 serves as the catalytic Nucleophile. An N-linked (GlcNAc...) asparagine glycan is attached at Asn115. Asp216 functions as the Proton acceptor in the catalytic mechanism. Positions 216–218 (DGA) match the DGA/G motif. The stretch at 361–385 (ETYEEALKRFAKLLSDRKKLRANKA) forms a coiled coil.

It belongs to the patatin family. Tuber and stolon.

The protein localises to the vacuole. Its function is as follows. Probable lipolytic acyl hydrolase (LAH), an activity which is thought to be involved in the response of tubers to pathogens. The protein is Patatin group A-2 of Solanum tuberosum (Potato).